The following is a 336-amino-acid chain: Glyceraldehyde-3-phosphate dehydrogenase (336 aa).

NAD(+) is bound by residues Arg-12–Ile-13, Asp-34, Arg-78, and Thr-121. D-glyceraldehyde 3-phosphate contacts are provided by residues Ser-151–Thr-153, Thr-182, Arg-199, Thr-212–Gly-213, and Arg-235. The active-site Nucleophile is Cys-152. Asn-316 contacts NAD(+).

It belongs to the glyceraldehyde-3-phosphate dehydrogenase family. In terms of assembly, homotetramer.

The protein localises to the cytoplasm. It carries out the reaction D-glyceraldehyde 3-phosphate + phosphate + NAD(+) = (2R)-3-phospho-glyceroyl phosphate + NADH + H(+). Its pathway is carbohydrate degradation; glycolysis; pyruvate from D-glyceraldehyde 3-phosphate: step 1/5. Its function is as follows. Catalyzes the oxidative phosphorylation of glyceraldehyde 3-phosphate (G3P) to 1,3-bisphosphoglycerate (BPG) using the cofactor NAD. The first reaction step involves the formation of a hemiacetal intermediate between G3P and a cysteine residue, and this hemiacetal intermediate is then oxidized to a thioester, with concomitant reduction of NAD to NADH. The reduced NADH is then exchanged with the second NAD, and the thioester is attacked by a nucleophilic inorganic phosphate to produce BPG. This is Glyceraldehyde-3-phosphate dehydrogenase (gap) from Streptococcus pyogenes serotype M3 (strain ATCC BAA-595 / MGAS315).